A 562-amino-acid chain; its full sequence is Arginine--tRNA ligase (562 aa).

The 'HIGH' region signature appears at 136–146; it reads ANPTGPMHMGN.

It belongs to the class-I aminoacyl-tRNA synthetase family. Monomer.

It is found in the cytoplasm. It carries out the reaction tRNA(Arg) + L-arginine + ATP = L-arginyl-tRNA(Arg) + AMP + diphosphate. The polypeptide is Arginine--tRNA ligase (argS) (Caldanaerobacter subterraneus subsp. tengcongensis (strain DSM 15242 / JCM 11007 / NBRC 100824 / MB4) (Thermoanaerobacter tengcongensis)).